Reading from the N-terminus, the 105-residue chain is Serine protease inhibitor Kazal-type 6 (105 aa).

An N-terminal signal peptide occupies residues 1–23 (MKVAGVFLLLSLALLCFFSGAFS). Q24 carries the pyrrolidone carboxylic acid modification. The region spanning 49 to 105 (RLFQINCGEFRDPKVFCTRESDPLCGSDGQTYGNKCAFCKALEKSSGKINLKHRGKC) is the Kazal-like domain. Cystine bridges form between C55/C87, C65/C84, and C73/C105.

Expressed in the upper epidermis and in skin appendages.

It localises to the secreted. Its function is as follows. Serine protease inhibitor selective for kallikreins. Efficiently inhibits KLK5 and human KLK2, KLK4, KLK5, KLK6, KLK7, KLK12, KLK13 and KLK14. Doesn't inhibit human KLK1 and KLK8. The chain is Serine protease inhibitor Kazal-type 6 (Spink6) from Mus musculus (Mouse).